Reading from the N-terminus, the 526-residue chain is Butyrophilin subfamily 1 member A1 (526 aa).

An N-terminal signal peptide occupies residues 1–26 (MAVFPSSGLPRCLLTLILLQLPKLDS). 2 Ig-like V-type domains span residues 27-138 (APFD…ALVH) and 148-234 (PHIS…VEIS). Residues 27-242 (APFDVIGPPE…ISIPASSLPR (216 aa)) lie on the Extracellular side of the membrane. Cystine bridges form between Cys-50–Cys-124 and Cys-164–Cys-218. Asn-55 and Asn-215 each carry an N-linked (GlcNAc...) asparagine glycan. The chain crosses the membrane as a helical span at residues 243–269 (LTPWIVAVAVILMVLGLLTIGSIFFTW). Residues 270 to 526 (RLYNERPRER…IPTQPSQGAP (257 aa)) lie on the Cytoplasmic side of the membrane. The 195-residue stretch at 285–479 (SKERLLEELK…LTICPIADGP (195 aa)) folds into the B30.2/SPRY domain. The tract at residues 495 to 526 (IPLSPMGEDSAPRDADTLHSKLIPTQPSQGAP) is disordered. Residues 504–513 (SAPRDADTLH) are compositionally biased toward basic and acidic residues. The segment covering 517–526 (IPTQPSQGAP) has biased composition (polar residues).

The protein belongs to the immunoglobulin superfamily. BTN/MOG family. In terms of assembly, seems to associate with xanthine dehydrogenase/oxidase. Post-translationally, N-glycosylated.

The protein resides in the membrane. It localises to the secreted. Its function is as follows. May function in the secretion of milk-fat droplets. May act as a specific membrane-associated receptor for the association of cytoplasmic droplets with the apical plasma membrane. Inhibits the proliferation of CD4 and CD8 T-cells activated by anti-CD3 antibodies, T-cell metabolism and IL2 and IFNG secretion. The chain is Butyrophilin subfamily 1 member A1 (BTN1A1) from Homo sapiens (Human).